Here is a 581-residue protein sequence, read N- to C-terminus: Intermediate filament protein ifa-3 (581 aa).

Positions 1-33 (MADPDSYRSSITSRPAFNRTVTSSTQNYGTPAS) are disordered. The interval 1 to 74 (MADPDSYRSS…RDDREREKKE (74 aa)) is head. The span at 7-33 (YRSSITSRPAFNRTVTSSTQNYGTPAS) shows a compositional bias: polar residues. In terms of domain architecture, IF rod spans 71–424 (EKKEITELND…RMLEGNSEEN (354 aa)). The segment at 75 to 106 (ITELNDRLASYIGKVRFLAAQNRKLEADLNVL) is coil 1A. The interval 107-120 (QSRFGKSTGSVKIM) is linker 1. Positions 121–258 (YEMEITTATN…RGFETELKDL (138 aa)) are coil 1B. A linker 12 region spans residues 259–276 (QAQAARDTTSENREYFKN). The interval 277 to 424 (ELMNSIRDIR…RMLEGNSEEN (148 aa)) is coil 2. Positions 425–578 (GLRQLVEKVV…THMQRQSQQT (154 aa)) are tail. The 118-residue stretch at 457–574 (SRTSYQRSAK…EERATHMQRQ (118 aa)) folds into the LTD domain.

This sequence belongs to the intermediate filament family. As to quaternary structure, forms some heteromeric filaments with ifb-1. As to expression, expressed in the embryonic and larval hypodermis. Also expressed in the ventral nerve cord of larvae.

Its subcellular location is the cytoplasm. Functionally, cytoplasmic intermediate filaments provide mechanical strength to cells. Essential protein, involved in attachment structures in epidermal cells that connect muscles to the external cuticle. Required for epidermal morphogenesis in embryos. Probable component of embryonic epidermal attachment structures. In Caenorhabditis elegans, this protein is Intermediate filament protein ifa-3 (ifa-3).